A 296-amino-acid chain; its full sequence is ADP-forming sulfoacetate-CoA ligase subunit SqwL (296 aa).

Residues 17–20 (TGSE), Lys-43, and 96–98 (IAD) each bind CoA. His-251 (tele-phosphohistidine intermediate) is an active-site residue.

Belongs to the succinate/malate CoA ligase alpha subunit family. Forms a complex with SqwK.

The catalysed reaction is sulfoacetate + ATP + CoA = sulfoacetyl-CoA + ADP + phosphate. In terms of biological role, part of a variant of the sulfo-TK pathway, a D-sulfoquinovose degradation pathway that produces sulfoacetate. Hydrolyzes sulfoacetyl-coenzyme A (sulfoacetyl-CoA) to produce sulfoacetate and CoA coupled with the phosphorylation of ADP to generate ATP. Cannot use succinate, acetate or 3-hydroxypropionate, and shows only residual activities with malonate and 3-sulfopropanoate. The polypeptide is ADP-forming sulfoacetate-CoA ligase subunit SqwL (Acholeplasma sp).